The primary structure comprises 417 residues: NADH-quinone oxidoreductase subunit D (417 aa).

The protein belongs to the complex I 49 kDa subunit family. In terms of assembly, NDH-1 is composed of 14 different subunits. Subunits NuoB, C, D, E, F, and G constitute the peripheral sector of the complex.

It localises to the cell inner membrane. It catalyses the reaction a quinone + NADH + 5 H(+)(in) = a quinol + NAD(+) + 4 H(+)(out). NDH-1 shuttles electrons from NADH, via FMN and iron-sulfur (Fe-S) centers, to quinones in the respiratory chain. The immediate electron acceptor for the enzyme in this species is believed to be ubiquinone. Couples the redox reaction to proton translocation (for every two electrons transferred, four hydrogen ions are translocated across the cytoplasmic membrane), and thus conserves the redox energy in a proton gradient. The protein is NADH-quinone oxidoreductase subunit D of Legionella pneumophila (strain Corby).